A 1400-amino-acid chain; its full sequence is Clustered mitochondria protein homolog (1400 aa).

Disordered regions lie at residues 1–39, 56–78, and 212–243; these read MVSKTDDIPASVPNCSPADFARDGETANSKGTTSKKEAS, GHDQAEEADSKQDGSGDADQAED, and GDTGKRKKKGSELEQIDCTPPEHILPGSKERP. Residues 56–69 are compositionally biased toward basic and acidic residues; sequence GHDQAEEADSKQDG. Positions 380–622 constitute a Clu domain; the sequence is RAEDAYTSRL…RTFPPDLNFL (243 aa). The segment at 684–741 is disordered; the sequence is AALQDSNAAGAGSENKPLALESCDGTPDSPTSSESTLTPEDSEATTVSENSSAENQEA. The span at 707 to 722 shows a compositional bias: low complexity; sequence DGTPDSPTSSESTLTP. Residues 727-741 are compositionally biased toward polar residues; sequence ATTVSENSSAENQEA. TPR repeat units lie at residues 1088–1121, 1130–1163, 1172–1205, and 1214–1247; these read AFHFFQSGQAKVQQGFLKEGCELINEALNLFNNV, CACLRLLARLNYIMGDHPEALSNQQKAVLMSERV, IQEYMHLALYCFANGQLSTALKLLYRARYLMLVV, and ALLDSNIGLVLHGVMEYDLSLRFLENALAINTKY. A compositionally biased stretch (polar residues) spans 1377-1388; the sequence is QDSGKIQEQQGS. The disordered stretch occupies residues 1377–1400; it reads QDSGKIQEQQGSHLELDDKLPVDD. A compositionally biased stretch (basic and acidic residues) spans 1390-1400; the sequence is LELDDKLPVDD.

This sequence belongs to the CLU family.

It is found in the cytoplasm. In terms of biological role, mRNA-binding protein involved in proper cytoplasmic distribution of mitochondria. This chain is Clustered mitochondria protein homolog, found in Danio rerio (Zebrafish).